The chain runs to 403 residues: ATP phosphoribosyltransferase regulatory subunit (403 aa).

This sequence belongs to the class-II aminoacyl-tRNA synthetase family. HisZ subfamily. Heteromultimer composed of HisG and HisZ subunits.

It is found in the cytoplasm. Its pathway is amino-acid biosynthesis; L-histidine biosynthesis; L-histidine from 5-phospho-alpha-D-ribose 1-diphosphate: step 1/9. Required for the first step of histidine biosynthesis. May allow the feedback regulation of ATP phosphoribosyltransferase activity by histidine. The chain is ATP phosphoribosyltransferase regulatory subunit from Crocosphaera subtropica (strain ATCC 51142 / BH68) (Cyanothece sp. (strain ATCC 51142)).